The primary structure comprises 272 residues: Small ribosomal subunit biogenesis GTPase RsgA (272 aa).

Residues 56-207 enclose the CP-type G domain; the sequence is KNILIRPKVA…IIDTPGFSSI (152 aa). Residues 105 to 108 and 151 to 159 contribute to the GTP site; these read TKAD and GQSGVGKTT. Zn(2+) is bound by residues cysteine 230, cysteine 235, histidine 237, and cysteine 245.

It belongs to the TRAFAC class YlqF/YawG GTPase family. RsgA subfamily. Monomer. Associates with 30S ribosomal subunit, binds 16S rRNA. The cofactor is Zn(2+).

It is found in the cytoplasm. Functionally, one of several proteins that assist in the late maturation steps of the functional core of the 30S ribosomal subunit. Helps release RbfA from mature subunits. May play a role in the assembly of ribosomal proteins into the subunit. Circularly permuted GTPase that catalyzes slow GTP hydrolysis, GTPase activity is stimulated by the 30S ribosomal subunit. In Mycoplasmopsis pulmonis (strain UAB CTIP) (Mycoplasma pulmonis), this protein is Small ribosomal subunit biogenesis GTPase RsgA.